The chain runs to 168 residues: Bifunctional protein PyrR (168 aa).

The PRPP-binding signature appears at 90–102 (LVLIDDVLMSGRT).

This sequence belongs to the purine/pyrimidine phosphoribosyltransferase family. PyrR subfamily.

The catalysed reaction is UMP + diphosphate = 5-phospho-alpha-D-ribose 1-diphosphate + uracil. Its function is as follows. Regulates the transcription of the pyrimidine nucleotide (pyr) operon in response to exogenous pyrimidines. Functionally, also displays a weak uracil phosphoribosyltransferase activity which is not physiologically significant. This chain is Bifunctional protein PyrR, found in Pseudomonas fluorescens (strain ATCC BAA-477 / NRRL B-23932 / Pf-5).